Consider the following 143-residue polypeptide: Transcriptional regulator MraZ (143 aa).

SpoVT-AbrB domains lie at 5 to 47 (TYTP…PREE) and 76 to 119 (TDEQ…DAQA).

This sequence belongs to the MraZ family. Forms oligomers.

It localises to the cytoplasm. It is found in the nucleoid. The chain is Transcriptional regulator MraZ from Rhodococcus opacus (strain B4).